The chain runs to 326 residues: Tetraacyldisaccharide 4'-kinase (326 aa).

Residue 55 to 62 (TAGGNGKT) participates in ATP binding.

This sequence belongs to the LpxK family.

The enzyme catalyses a lipid A disaccharide + ATP = a lipid IVA + ADP + H(+). The protein operates within glycolipid biosynthesis; lipid IV(A) biosynthesis; lipid IV(A) from (3R)-3-hydroxytetradecanoyl-[acyl-carrier-protein] and UDP-N-acetyl-alpha-D-glucosamine: step 6/6. Its function is as follows. Transfers the gamma-phosphate of ATP to the 4'-position of a tetraacyldisaccharide 1-phosphate intermediate (termed DS-1-P) to form tetraacyldisaccharide 1,4'-bis-phosphate (lipid IVA). This chain is Tetraacyldisaccharide 4'-kinase, found in Klebsiella pneumoniae subsp. pneumoniae (strain ATCC 700721 / MGH 78578).